We begin with the raw amino-acid sequence, 217 residues long: Ribonuclease HII (217 aa).

The RNase H type-2 domain occupies 25–215; the sequence is KLIAGVDESG…VKHVISDINR (191 aa). A divalent metal cation-binding residues include D31, E32, and D123.

The protein belongs to the RNase HII family. The cofactor is Mn(2+). Mg(2+) is required as a cofactor.

It is found in the cytoplasm. The enzyme catalyses Endonucleolytic cleavage to 5'-phosphomonoester.. Endonuclease that specifically degrades the RNA of RNA-DNA hybrids. The polypeptide is Ribonuclease HII (Blochmanniella pennsylvanica (strain BPEN)).